The following is a 54-amino-acid chain: Large ribosomal subunit protein bL33 (54 aa).

The protein belongs to the bacterial ribosomal protein bL33 family.

The chain is Large ribosomal subunit protein bL33 from Xylella fastidiosa (strain M23).